Consider the following 395-residue polypeptide: Acetate kinase 2 (395 aa).

Position 8 (asparagine 8) interacts with Mg(2+). ATP is bound at residue lysine 15. Arginine 89 contacts substrate. The Proton donor/acceptor role is filled by aspartate 146. ATP contacts are provided by residues 206–210 (HIGNG), 283–285 (DMR), and 331–335 (GVGEN). Glutamate 383 is a binding site for Mg(2+).

Belongs to the acetokinase family. As to quaternary structure, homodimer. Requires Mg(2+) as cofactor. It depends on Mn(2+) as a cofactor.

It is found in the cytoplasm. The enzyme catalyses acetate + ATP = acetyl phosphate + ADP. It functions in the pathway metabolic intermediate biosynthesis; acetyl-CoA biosynthesis; acetyl-CoA from acetate: step 1/2. Catalyzes the formation of acetyl phosphate from acetate and ATP. Can also catalyze the reverse reaction. In Lactococcus lactis subsp. lactis (strain IL1403) (Streptococcus lactis), this protein is Acetate kinase 2.